The primary structure comprises 61 residues: Large ribosomal subunit protein eL37 (61 aa).

Cys-20, Cys-23, Cys-35, and Cys-38 together coordinate Zn(2+). The C4-type zinc finger occupies 20 to 38; sequence CPRCGRHSYNIVKGYCAAC.

Belongs to the eukaryotic ribosomal protein eL37 family. Requires Zn(2+) as cofactor.

Its function is as follows. Binds to the 23S rRNA. This Caldivirga maquilingensis (strain ATCC 700844 / DSM 13496 / JCM 10307 / IC-167) protein is Large ribosomal subunit protein eL37.